The sequence spans 457 residues: MVQISEVQEQSSTAYTRTAAHTHIKGLGLDEFGVAKQVEGGFVGQAEAREACGVIVDLIKAKKMSGKAILLAGGPSTGKTALALAISQELGPKVPFCPLVGSELYSVEVKKTEALMENFRRAIGLRIKETKEVYEGEVTELTPEEAENPLGGYGKTISHVIVGLKSAKGTKTLRLDPTIYESIQREKVSVGDVIYIESNTGAVKRVGRSDAFATEFDLEAEEYVPLPKGEVHKKKEIVQDVTLHDLDVANARPQGGQDVISMMGQLMKPKKTEITEKLRHEVNKVVAKYIDQGVAELVPGVLFIDEVNMLDIEIFTYLNRALESDIAPVVVLASNRGMITVRGTDDVVSPHGVPPDLIDRLLIVRTLPYNREEIKTIISKRAAVENLQVEDEALEFLATLGTETSLRYVLQLLSPSGIIAKIANRAEISVADVEEAKLLFLDAKRSTKILEQSENYL.

73–80 serves as a coordination point for ATP; the sequence is GGPSTGKT.

It belongs to the RuvB family. In terms of assembly, may form heterododecamers with RVB2. Component of the SWR1 chromatin remodeling complex, the INO80 chromatin remodeling complex, and of the R2TP complex.

It is found in the nucleus. The catalysed reaction is ATP + H2O = ADP + phosphate + H(+). DNA helicase which participates in several chromatin remodeling complexes, including the SWR1 and the INO80 complexes. The SWR1 complex mediates the ATP-dependent exchange of histone H2A for the H2A variant HZT1 leading to transcriptional regulation of selected genes by chromatin remodeling. The INO80 complex remodels chromatin by shifting nucleosomes and is involved in DNA repair. Also involved in pre-rRNA processing. This is RuvB-like helicase 1 (RVB1) from Kluyveromyces lactis (strain ATCC 8585 / CBS 2359 / DSM 70799 / NBRC 1267 / NRRL Y-1140 / WM37) (Yeast).